Here is a 126-residue protein sequence, read N- to C-terminus: UPF0738 protein BH2850 (126 aa).

Belongs to the UPF0738 family.

The sequence is that of UPF0738 protein BH2850 from Halalkalibacterium halodurans (strain ATCC BAA-125 / DSM 18197 / FERM 7344 / JCM 9153 / C-125) (Bacillus halodurans).